A 419-amino-acid chain; its full sequence is GTPase Obg (419 aa).

Residues 2 to 159 enclose the Obg domain; sequence SAFVDAVTVE…FLAKVELQVL (158 aa). The OBG-type G domain occupies 160-325; that stretch reads ADVGLLGYPN…LKYEIATTLK (166 aa). GTP contacts are provided by residues 166 to 173, 191 to 195, 212 to 215, 279 to 282, and 306 to 308; these read GYPNVGKS, FTTLS, DLPG, NKMD, and SAL. Residues serine 173 and threonine 193 each coordinate Mg(2+). The OCT domain occupies 341–419; sequence LNAEDAVDFI…IFSYEFEYLE (79 aa).

Belongs to the TRAFAC class OBG-HflX-like GTPase superfamily. OBG GTPase family. Monomer. The cofactor is Mg(2+).

It is found in the cytoplasm. An essential GTPase which binds GTP, GDP and possibly (p)ppGpp with moderate affinity, with high nucleotide exchange rates and a fairly low GTP hydrolysis rate. Plays a role in control of the cell cycle, stress response, ribosome biogenesis and in those bacteria that undergo differentiation, in morphogenesis control. The protein is GTPase Obg of Acholeplasma laidlawii (strain PG-8A).